A 335-amino-acid chain; its full sequence is RNA 3'-terminal phosphate cyclase (335 aa).

ATP is bound by residues Gln101 and His282 to Asp285. Residue His306 is the Tele-AMP-histidine intermediate of the active site.

The protein belongs to the RNA 3'-terminal cyclase family. Type 1 subfamily.

Its subcellular location is the cytoplasm. It catalyses the reaction a 3'-end 3'-phospho-ribonucleotide-RNA + ATP = a 3'-end 2',3'-cyclophospho-ribonucleotide-RNA + AMP + diphosphate. Catalyzes the conversion of 3'-phosphate to a 2',3'-cyclic phosphodiester at the end of RNA. The mechanism of action of the enzyme occurs in 3 steps: (A) adenylation of the enzyme by ATP; (B) transfer of adenylate to an RNA-N3'P to produce RNA-N3'PP5'A; (C) and attack of the adjacent 2'-hydroxyl on the 3'-phosphorus in the diester linkage to produce the cyclic end product. The biological role of this enzyme is unknown but it is likely to function in some aspects of cellular RNA processing. The sequence is that of RNA 3'-terminal phosphate cyclase from Sulfolobus acidocaldarius (strain ATCC 33909 / DSM 639 / JCM 8929 / NBRC 15157 / NCIMB 11770).